We begin with the raw amino-acid sequence, 75 residues long: MATKKKTFEEAIAELETIVEALENGSASLEDSLDMYQKGIELTKLCQDKLQSAEKRMAKVVTDAGEEIPFEADGE.

This sequence belongs to the XseB family. In terms of assembly, heterooligomer composed of large and small subunits.

Its subcellular location is the cytoplasm. The catalysed reaction is Exonucleolytic cleavage in either 5'- to 3'- or 3'- to 5'-direction to yield nucleoside 5'-phosphates.. Functionally, bidirectionally degrades single-stranded DNA into large acid-insoluble oligonucleotides, which are then degraded further into small acid-soluble oligonucleotides. In Listeria monocytogenes serotype 4b (strain CLIP80459), this protein is Exodeoxyribonuclease 7 small subunit.